Here is a 431-residue protein sequence, read N- to C-terminus: FAD-dependent monooxygenase nodY1 (431 aa).

A signal peptide spans 1-21; it reads MASTGVSVIVVGLGLAGLTTA. FAD-binding residues include E35 and R110. R188 is a catalytic residue. D313 lines the FAD pocket.

It belongs to the paxM FAD-dependent monooxygenase family. FAD is required as a cofactor.

The protein operates within secondary metabolite biosynthesis. Its function is as follows. FAD-dependent monooxygenase; part of the gene cluster that mediates the biosynthesis of the indole diterpenes nodulisporic acids (NA). Nodulisporic acid A (NAA) and its chemically modified derivatives are of particular significance because of their highly potent insecticidal activity against blood-feeding arthropods and lack of observable adverse effects on mammals, in particular the tremogenicity associated with the paspaline-derived IDTs is not observed. The geranylgeranyl diphosphate (GGPP) synthase ggs1, localized outside of the cluster, is proposed to catalyze the first step in nodulisporic acid biosynthesis via conversion of farnesyl pyrophosphate and isopentyl pyrophosphate into geranylgeranyl pyrophosphate (GGPP). Condensation of indole-3-glycerol phosphate with GGPP by the prenyl transferase nodC then forms 3-geranylgeranylindole (3-GGI). Epoxidation by the FAD-dependent monooxygenase nodM leads to a single-epoxidized-GGI that is substrate of the terpene cyclase nodB for cyclization to yield emindole SB. The terminal methyl carbon, C28, of emindole SB is then oxidized by the cytochrome P450 monooxygenase nodW to produce nodulisporic acid F (NAF), the pentacyclic core of NAA. NAF is converted to nodulisporic acid E (NAE) via prenylation. This step is probably performed by one of the indole diterpene prenyltransferases nodD1 or nodD2. Several oxidation steps performed by the FAD-linked oxidoreductase nodO and one of the cytochrome P450 monooxygenase nodR, nodX or nodZ further convert NAE to nodulisporic acid D (NAD). NAD is substrate of cytochrome P450 monooxygenase nodJ to produce the precursor of nodulisporic acid C (NAC), converted to NAC by one of the indole diterpene prenyltransferases nodD1 or nodD2. The FAD-dependent monooxygenase nodY2 then oxidizes NAC to nodulisporic acid B (NAB). Finally NAB is converted to NAA by one of the cytochrome P450 monooxygenases nodR, nodX or nodZ. This Hypoxylon pulicicidum protein is FAD-dependent monooxygenase nodY1.